Here is a 258-residue protein sequence, read N- to C-terminus: MDRPTTYPMDQPAGFRDAQGRHGGVVLPARPEPIALDPATTFLIVVDVQNAYASPGGYLDRAGFDVSGTGPVIARIARAVAAARAAGIPVLWFQNGWDPAYVEAGGPGSPNWHKSNALKTMRRNPEANTQLLAKGSWDYALVDALTPEPGDIVMGKPRYSGFYNTPLDSTLRARGVTTLVFTGIATNVCVESTLRDGFHREYFGIVLADATHQAGPESLHRAALANIETFFGWVSDVAAFESALGVPSRAPAGADLAG.

Positions 1-23 (MDRPTTYPMDQPAGFRDAQGRHG) are disordered. Asp-47 (proton acceptor) is an active-site residue. The active site involves Lys-156. Cys-189 (nucleophile) is an active-site residue.

It belongs to the isochorismatase family. RutB subfamily.

It carries out the reaction (Z)-3-ureidoacrylate + H2O + H(+) = (Z)-3-aminoacrylate + NH4(+) + CO2. The catalysed reaction is (Z)-3-ureidoacrylate + H2O = (Z)-3-aminoacrylate + carbamate + H(+). The enzyme catalyses (Z)-2-methylureidoacrylate + H2O + H(+) = (Z)-2-methylaminoacrylate + NH4(+) + CO2. Hydrolyzes ureidoacrylate to form aminoacrylate and carbamate. The carbamate hydrolyzes spontaneously, thereby releasing one of the nitrogen atoms of the pyrimidine ring as ammonia and one of its carbon atoms as CO2. This Methylobacterium radiotolerans (strain ATCC 27329 / DSM 1819 / JCM 2831 / NBRC 15690 / NCIMB 10815 / 0-1) protein is Ureidoacrylate amidohydrolase RutB.